Reading from the N-terminus, the 469-residue chain is 3-isopropylmalate dehydratase large subunit (469 aa).

Cys347, Cys408, and Cys411 together coordinate [4Fe-4S] cluster.

This sequence belongs to the aconitase/IPM isomerase family. LeuC type 1 subfamily. Heterodimer of LeuC and LeuD. The cofactor is [4Fe-4S] cluster.

It carries out the reaction (2R,3S)-3-isopropylmalate = (2S)-2-isopropylmalate. It participates in amino-acid biosynthesis; L-leucine biosynthesis; L-leucine from 3-methyl-2-oxobutanoate: step 2/4. Its function is as follows. Catalyzes the isomerization between 2-isopropylmalate and 3-isopropylmalate, via the formation of 2-isopropylmaleate. In Haemophilus influenzae (strain 86-028NP), this protein is 3-isopropylmalate dehydratase large subunit.